The primary structure comprises 1357 residues: DNA-directed RNA polymerase subunit beta (1357 aa).

The protein belongs to the RNA polymerase beta chain family. The RNAP catalytic core consists of 2 alpha, 1 beta, 1 beta' and 1 omega subunit. When a sigma factor is associated with the core the holoenzyme is formed, which can initiate transcription.

It catalyses the reaction RNA(n) + a ribonucleoside 5'-triphosphate = RNA(n+1) + diphosphate. In terms of biological role, DNA-dependent RNA polymerase catalyzes the transcription of DNA into RNA using the four ribonucleoside triphosphates as substrates. The polypeptide is DNA-directed RNA polymerase subunit beta (Pseudomonas aeruginosa (strain UCBPP-PA14)).